We begin with the raw amino-acid sequence, 251 residues long: Flap endonuclease Xni (251 aa).

A Mg(2+)-binding site is contributed by aspartate 104. The region spanning 160–249 is the 5'-3' exonuclease domain; it reads VLPRQLPDYW…IDGNLQQLRL (90 aa). Residues leucine 171, alanine 172, proline 180, valine 182, and isoleucine 185 each coordinate K(+). Positions 184–189 are interaction with DNA; sequence GIGPKS.

Belongs to the Xni family. Mg(2+) serves as cofactor. The cofactor is K(+).

Has flap endonuclease activity. During DNA replication, flap endonucleases cleave the 5'-overhanging flap structure that is generated by displacement synthesis when DNA polymerase encounters the 5'-end of a downstream Okazaki fragment. The sequence is that of Flap endonuclease Xni from Salmonella newport (strain SL254).